The following is a 236-amino-acid chain: Small ribosomal subunit protein uS2c (236 aa).

This sequence belongs to the universal ribosomal protein uS2 family.

Its subcellular location is the plastid. The protein resides in the chloroplast. This is Small ribosomal subunit protein uS2c (rps2) from Oryza nivara (Indian wild rice).